The chain runs to 331 residues: FMRFamide-related neuropeptides (331 aa).

A signal peptide spans 1–25 (MRCWSPCSLLVVIAIYCLSSHTSEA). The propeptide occupies 26-65 (FDLAQACVESQRLSLLPICDTIFAVQQEGAQQSADDGLRS). Residues Phe71 and Phe83 each carry the phenylalanine amide modification. Positions 86 to 94 (NVPDLPFED) are excised as a propeptide. Phenylalanine amide is present on Phe100. Positions 103–168 (AAPQLDDLLK…YVDDVEDSDV (66 aa)) are excised as a propeptide. Positions 122–153 (QKSDDTSVRRKRSTDAAPQSNTDSAEQKNDSA) are disordered. A phenylalanine amide mark is found at Phe174 and Phe181. Residues 184–194 (NPSDVGSKLTE) constitute a propeptide that is removed on maturation. Phe200 carries the phenylalanine amide modification. Positions 203–205 (DPE) are excised as a propeptide. The residue at position 211 (Phe211) is a Phenylalanine amide. The propeptide occupies 214–216 (SDD). At Phe222 the chain carries Phenylalanine amide. The propeptide occupies 225–236 (NPGDAEDELEED). Phe242 is modified (phenylalanine amide). The propeptide occupies 245 to 254 (GDEEDEEEAE). Position 260 is a phenylalanine amide (Phe260). The propeptide occupies 263–265 (DPE). The residue at position 271 (Phe271) is a Phenylalanine amide. A propeptide spanning residues 274–277 (NGEE) is cleaved from the precursor. At Phe283 the chain carries Phenylalanine amide. Residues 286–293 (NPEEPEAD) constitute a propeptide that is removed on maturation. Phe299 carries the phenylalanine amide modification. The propeptide occupies 302-312 (GGEEDDVNTEE). Phe318 bears the Phenylalanine amide mark. The propeptide occupies 321-331 (SAEKCKGCLEG).

Belongs to the FARP (FMRFamide related peptide) family. In terms of tissue distribution, present ubiquitously in the brain and regions of the central nervous system as well as in the periphery and throughout the dermal chromatophore layer (at protein level).

The protein localises to the secreted. Excitatory neurotransmitters that directly modulate chromatophore function by activating chromatophore expansion at the chromatophore neuromuscular junction. This Sepia officinalis (Common cuttlefish) protein is FMRFamide-related neuropeptides.